Consider the following 494-residue polypeptide: UDP-glucose 6-dehydrogenase (494 aa).

NAD(+) contacts are provided by residues 11–16, Asp-36, Arg-41, and 89–93; these read GAGYVG and VNTPT. The segment at 88–110 is disordered; sequence SVNTPTKTYGMGKGRAADLKYIE. At Lys-107 the chain carries N6-acetyllysine. The allosteric switch region stretch occupies residues 129-135; the sequence is KSTVPVR. Residue 130 to 132 participates in NAD(+) binding; sequence STV. Catalysis depends on Glu-161, which acts as the Proton donor/acceptor. Substrate is bound by residues 161-165, 220-224, Arg-260, and 267-273; these read EFLAE, KLTAN, and KASVGFG. Glu-165 is a binding site for NAD(+). Residue Lys-220 is the Proton donor/acceptor of the active site. Residue Cys-276 is the Nucleophile of the active site. An NAD(+)-binding site is contributed by 276–279; it reads CFQK. The tract at residues 321 to 325 is important for formation of active hexamer structure; that stretch reads SLFNT. Residue 338 to 339 coordinates substrate; sequence FK. Residue Arg-346 participates in NAD(+) binding. A substrate-binding site is contributed by Arg-442. Residues 466–494 form a disordered region; it reads VSSKRIPYAPSGEIPKFSLQDMPNKKPRV. Ser-476 bears the Phosphoserine mark.

Belongs to the UDP-glucose/GDP-mannose dehydrogenase family. As to quaternary structure, homohexamer.

It carries out the reaction UDP-alpha-D-glucose + 2 NAD(+) + H2O = UDP-alpha-D-glucuronate + 2 NADH + 3 H(+). The protein operates within nucleotide-sugar biosynthesis; UDP-alpha-D-glucuronate biosynthesis; UDP-alpha-D-glucuronate from UDP-alpha-D-glucose: step 1/1. With respect to regulation, UDP-alpha-D-xylose (UDX) acts as a feedback inhibitor. It binds at the same site as the substrate, but functions as allosteric inhibitor by triggering a conformation change that disrupts the active hexameric ring structure and gives rise to an inactive, horseshoe-shaped hexamer. Functionally, catalyzes the formation of UDP-alpha-D-glucuronate, a constituent of complex glycosaminoglycans. Required for the biosynthesis of chondroitin sulfate and heparan sulfate. Required for embryonic development via its role in the biosynthesis of glycosaminoglycans. Required for proper brain and neuronal development. In Bos taurus (Bovine), this protein is UDP-glucose 6-dehydrogenase (UGDH).